We begin with the raw amino-acid sequence, 450 residues long: Regulator of sigma E protease (450 aa).

Position 22 (His22) interacts with Zn(2+). The active site involves Glu23. His26 lines the Zn(2+) pocket. A helical transmembrane segment spans residues 98 to 120 (AAIIAAGPVANFIFAIFAYWLVF). 2 PDZ domains span residues 115–186 (AYWL…APFG) and 199–291 (HWAF…TPDT). A run of 2 helical transmembrane segments spans residues 376–398 (VIYY…LFPL) and 426–445 (FSYR…ALFN).

It belongs to the peptidase M50B family. Interacts with RseA. The cofactor is Zn(2+).

The protein resides in the cell inner membrane. Its function is as follows. A site-2 regulated intramembrane protease (S2P) that cleaves the peptide bond between 'Ala-108' and 'Cys-109' in the transmembrane region of RseA. Part of a regulated intramembrane proteolysis (RIP) cascade. Acts on DegS-cleaved RseA to release the cytoplasmic domain of RseA. This provides the cell with sigma-E (RpoE) activity through the proteolysis of RseA. The protein is Regulator of sigma E protease (rseP) of Salmonella typhi.